The chain runs to 87 residues: MKTFDELFAELQERARTRPEGSATVAALDAGVHAQGKKVIEEAGEVWIAAEYESDEALAEEISQLLYRLQVVMLGRGLSLEDVYRYL.

Belongs to the PRA-PH family.

It is found in the cytoplasm. It carries out the reaction 1-(5-phospho-beta-D-ribosyl)-ATP + H2O = 1-(5-phospho-beta-D-ribosyl)-5'-AMP + diphosphate + H(+). It functions in the pathway amino-acid biosynthesis; L-histidine biosynthesis; L-histidine from 5-phospho-alpha-D-ribose 1-diphosphate: step 2/9. The chain is Phosphoribosyl-ATP pyrophosphatase from Saccharopolyspora erythraea (strain ATCC 11635 / DSM 40517 / JCM 4748 / NBRC 13426 / NCIMB 8594 / NRRL 2338).